The sequence spans 133 residues: Nickel-responsive regulator (133 aa).

His76, His87, His89, and Cys95 together coordinate Ni(2+).

This sequence belongs to the transcriptional regulatory CopG/NikR family. Homotetramer. Ni(2+) is required as a cofactor.

Its function is as follows. Transcriptional repressor of the nikABCDE operon. Is active in the presence of excessive concentrations of intracellular nickel. This Escherichia coli (strain SE11) protein is Nickel-responsive regulator.